We begin with the raw amino-acid sequence, 281 residues long: MVQIQFHQGEPLGHKKEKPPPVSPPSPPPIRRVTVITKDEDTLRSVQHFLWMVRLYGTVVFQTSATIATTILFMLIPWRVTAPYLRDTLPFWSTLLPCALRCHAYWLERRRRPGTLMLVMVYTTLTTISVSTIGLCFDRTVVIQAYVLSSMLCVWCTGLAWLMAWNMQRRLAILCLLSFMLPILWLFIAVQSWEPYQRIILALTVSFIYGLKIVLIRDTLTVLYRSPSNCYTDGDLLRTAMLLYMDQVIMFLLVVVPLTAPIWYPNYAGALGRTAHWLFHK.

The interval 11-30 is disordered; the sequence is PLGHKKEKPPPVSPPSPPPI. Positions 20 to 30 are enriched in pro residues; it reads PPVSPPSPPPI. Helical transmembrane passes span 58–78, 88–107, 117–137, 145–165, 171–191, 196–216, and 248–268; these read TVVF…LIPW, TLPF…AYWL, MLVM…GLCF, AYVL…LMAW, LAIL…IAVQ, YQRI…IVLI, and VIMF…PNYA.

It belongs to the cytomegalovirus US12 family.

It is found in the membrane. This is an uncharacterized protein from Human cytomegalovirus (strain AD169) (HHV-5).